A 313-amino-acid chain; its full sequence is 4-diphosphocytidyl-2-C-methyl-D-erythritol kinase (313 aa).

The active site involves K10. 95–105 (PVTAGLGGGSS) lines the ATP pocket. The active site involves D136. Residues 289–313 (HPRVSPWRSPRSASSRSTRRSSRPT) are disordered. The segment covering 292-304 (VSPWRSPRSASSR) has biased composition (low complexity).

This sequence belongs to the GHMP kinase family. IspE subfamily.

The catalysed reaction is 4-CDP-2-C-methyl-D-erythritol + ATP = 4-CDP-2-C-methyl-D-erythritol 2-phosphate + ADP + H(+). The protein operates within isoprenoid biosynthesis; isopentenyl diphosphate biosynthesis via DXP pathway; isopentenyl diphosphate from 1-deoxy-D-xylulose 5-phosphate: step 3/6. Catalyzes the phosphorylation of the position 2 hydroxy group of 4-diphosphocytidyl-2C-methyl-D-erythritol. This chain is 4-diphosphocytidyl-2-C-methyl-D-erythritol kinase, found in Anaeromyxobacter dehalogenans (strain 2CP-1 / ATCC BAA-258).